The following is a 104-amino-acid chain: Urease subunit beta (104 aa).

This sequence belongs to the urease beta subunit family. Heterotrimer of UreA (gamma), UreB (beta) and UreC (alpha) subunits. Three heterotrimers associate to form the active enzyme.

Its subcellular location is the cytoplasm. It catalyses the reaction urea + 2 H2O + H(+) = hydrogencarbonate + 2 NH4(+). It functions in the pathway nitrogen metabolism; urea degradation; CO(2) and NH(3) from urea (urease route): step 1/1. The polypeptide is Urease subunit beta (Rhodopseudomonas palustris (strain BisB5)).